We begin with the raw amino-acid sequence, 992 residues long: ATP-dependent DNA helicase PIF7 (992 aa).

A mitochondrion-targeting transit peptide spans 1–21 (MWDGPLRSRQNLRTVAKLRSS). Disordered stretches follow at residues 20–43 (SSGC…GETA), 145–182 (TVNK…TAAS), and 190–209 (LDSS…AVTQ). Composition is skewed to polar residues over residues 23–43 (CPLT…GETA), 173–182 (NVDNTTTAAS), and 191–208 (DSSS…QAVT). 237-244 (GGAGTGKS) is an ATP binding site. A DNA-binding region spans residues 651–670 (QAYVALSRCTDVANLVIENF).

The protein belongs to the helicase family. PIF1 subfamily. As to quaternary structure, monomer. The cofactor is Mg(2+).

Its subcellular location is the mitochondrion matrix. It is found in the kinetoplast. The enzyme catalyses Couples ATP hydrolysis with the unwinding of duplex DNA at the replication fork by translocating in the 5'-3' direction. This creates two antiparallel DNA single strands (ssDNA). The leading ssDNA polymer is the template for DNA polymerase III holoenzyme which synthesizes a continuous strand.. The catalysed reaction is ATP + H2O = ADP + phosphate + H(+). Functionally, DNA-dependent ATPase and 5'-3' DNA helicase required for the maintenance of mitochondrial (kinetoplast) genome stability. The protein is ATP-dependent DNA helicase PIF7 of Trypanosoma brucei brucei (strain 927/4 GUTat10.1).